The following is a 453-amino-acid chain: Presenilin-like protein At1g08700 (453 aa).

Topologically, residues 1 to 8 are cytoplasmic; sequence MESSILDS. The chain crosses the membrane as a helical span at residues 9–29; it reads LGVEIIGVMAPVSICMFLVVL. Residues 30–68 lie on the Lumenal side of the membrane; it reads LTYSLSVTSDPQIRSAANLIYIENPSDSTTVKLEGSLAN. The helical transmembrane segment at 69–89 threads the bilayer; it reads AIVFVVLIAAVTFILVLLFYY. Residues 90–103 are Cytoplasmic-facing; that stretch reads NFTNFLKHYMRFSA. A helical transmembrane segment spans residues 104–124; that stretch reads FFVLGTMGGAIFLSIIQHFSI. The Lumenal portion of the chain corresponds to 125-132; sequence PVDSITCF. A helical membrane pass occupies residues 133 to 153; the sequence is ILLFNFTILGTLSVFAGGIPI. The Cytoplasmic portion of the chain corresponds to 154 to 159; the sequence is VLRQCY. Transmembrane regions (helical) follow at residues 160–180 and 181–201; these read MVVMGIVVAAWFTKLPEWTTW and FILVALALYDLVAVLAPGGPL. Residue Asp-190 is part of the active site. At 202-369 the chain is on the cytoplasmic side; it reads KLLVELASSR…VVDISNRGIK (168 aa). Disordered stretches follow at residues 226 to 248 and 292 to 329; these read VSSGNQRRNRGSSLRALVGGGGV and IGNGSRGGLERSPLVGSPSASEHSTSVGTRGNMEDRES. Positions 227-240 are enriched in low complexity; sequence SSGNQRRNRGSSLR. Ser-296 carries the phosphoserine modification. Residues 309-320 show a composition bias toward polar residues; sequence PSASEHSTSVGT. The helical transmembrane segment at 370–390 threads the bilayer; that stretch reads LGLGDFIFYSVLVGRAAMYDL. Asp-374 is an active-site residue. The Lumenal segment spans residues 391–392; that stretch reads MT. Residues 393-413 form a helical membrane-spanning segment; that stretch reads VYACYLAIISGLGCTLILLSV. The Cytoplasmic segment spans residues 414–417; the sequence is YNRA. The segment at residues 418-438 is an intramembrane region (helical); the sequence is LPALPISIMLGVVFYFLTRLL. Positions 419-421 match the PAL motif; the sequence is PAL. Residues 439–453 are Cytoplasmic-facing; sequence MEPFVVGVTTNLMMF.

It belongs to the peptidase A22A family. As to quaternary structure, homodimer. Probable component of the gamma-secretase complex, a complex composed of a presenilin homodimer, nicastrin, APH1 and PEN2.

The protein localises to the endoplasmic reticulum membrane. The protein resides in the golgi apparatus membrane. Probable subunit of the gamma-secretase complex, an endoprotease complex that catalyzes the intramembrane cleavage of integral membrane proteins such as Notch receptors. The chain is Presenilin-like protein At1g08700 from Arabidopsis thaliana (Mouse-ear cress).